The chain runs to 319 residues: Taste receptor type 2 member 7 (319 aa).

Over 1–9 (MADKVQTTL) the chain is Extracellular. The helical transmembrane segment at 10-30 (LFLAVGEFSVGILGNAFIGLV) threads the bilayer. Topologically, residues 31–55 (NCMDWVKKRKIASIDLILTSLAISR) are cytoplasmic. Residues 56-76 (ICLLCVILLDCFILVLYPDVY) form a helical membrane-spanning segment. Residues 77–94 (ATGKEMRIIDFFWTLTNH) are Extracellular-facing. Residues 95–115 (LSIWFATCLSIYYXFRIANFF) traverse the membrane as a helical segment. Residues 116–128 (HPLFLWMKWRIDR) lie on the Cytoplasmic side of the membrane. A helical transmembrane segment spans residues 129–149 (VISWILLGCVVLSVFISLPAT). At 150–187 (ENLNADFRFCVKAKRKTNLTWSCRVNKTQHASTKLFLN) the chain is on the extracellular side. N-linked (GlcNAc...) asparagine glycosylation is found at Asn-167 and Asn-175. A helical membrane pass occupies residues 188-208 (LATLLPFCVCLMSFFLLILSL). Topologically, residues 209 to 235 (RRHIRRMQLSATGCRDPSTEAHVRALK) are cytoplasmic. Residues 236-256 (AVISFLLLFIAYYLSFLVATS) traverse the membrane as a helical segment. At 257–266 (SYFMPETELA) the chain is on the extracellular side. Residues 267–287 (VIFGESIALIYPSSHSFILIL) traverse the membrane as a helical segment. Over 288–319 (GNNKLRHASLKVIWKVMSILKGRKFQQHKQIG) the chain is Cytoplasmic.

Belongs to the G-protein coupled receptor T2R family.

It localises to the membrane. In terms of biological role, gustducin-coupled receptor implicated in the perception of bitter compounds in the oral cavity and the gastrointestinal tract. Signals through PLCB2 and the calcium-regulated cation channel TRPM5. The chain is Taste receptor type 2 member 7 (TAS2R7) from Pan troglodytes (Chimpanzee).